The sequence spans 115 residues: Potassium-transporting ATPase potassium-binding subunit (115 aa).

A run of 2 helical transmembrane segments spans residues 8 to 28 (YFLL…VAFF) and 60 to 80 (SYCT…YGLL).

The protein belongs to the KdpA family. In terms of assembly, the system is composed of three essential subunits: KdpA, KdpB and KdpC.

The protein resides in the cell membrane. Functionally, part of the high-affinity ATP-driven potassium transport (or Kdp) system, which catalyzes the hydrolysis of ATP coupled with the electrogenic transport of potassium into the cytoplasm. This subunit binds the extracellular potassium ions and delivers the ions to the membrane domain of KdpB through an intramembrane tunnel. This Geobacillus stearothermophilus (Bacillus stearothermophilus) protein is Potassium-transporting ATPase potassium-binding subunit.